Here is a 135-residue protein sequence, read N- to C-terminus: Thyrostimulin beta-5 subunit (135 aa).

Residues 1–19 form the signal peptide; it reads MVMPLVLSLALTPPPLCHA. Disulfide bonds link cysteine 30-cysteine 87, cysteine 54-cysteine 102, cysteine 63-cysteine 118, cysteine 67-cysteine 120, and cysteine 123-cysteine 130.

It belongs to the glycoprotein hormones subunit beta family. As to quaternary structure, heterodimer with GPHA2; non-covalently-linked. Expressed by the venom duct.

It is found in the secreted. The protein is Thyrostimulin beta-5 subunit of Conus victoriae (Queen Victoria cone).